The following is a 1008-amino-acid chain: G protein-regulated inducer of neurite outgrowth 1 (1008 aa).

Positions 1-859 are disordered; sequence MDTAEDPAWL…SPPSRRDAGL (859 aa). Position 60 is a phosphothreonine (Thr60). Ser64 and Ser75 each carry phosphoserine. Over residues 117-127 the composition is skewed to polar residues; the sequence is ISGTPEATTSG. 4 stretches are compositionally biased toward basic and acidic residues: residues 137–159, 167–178, 230–269, and 279–291; these read TEPK…KSSK, GKEDPGSSRKAD, PRKE…HPVS, and EKVD…KRDP. Ser237 is modified (phosphoserine). 2 stretches are compositionally biased toward polar residues: residues 326–336 and 391–406; these read SGKNGPVSSGT and HTDT…TSLK. Phosphoserine occurs at positions 436 and 452. The segment covering 454–466 has biased composition (basic and acidic residues); that stretch reads GKEDPVSSRREDP. The segment covering 481–491 has biased composition (polar residues); the sequence is PESSGKTNPVS. Residues 549–559 are compositionally biased toward basic and acidic residues; it reads GKEDPVSKGKA. Phosphoserine is present on Ser615. The segment covering 643-656 has biased composition (low complexity); the sequence is PGQEGAAAPGEAGA. Positions 659–679 are enriched in basic and acidic residues; that stretch reads LKKETPQASEKVDPGSCRKAE. Position 737 is a phosphoserine (Ser737). A compositionally biased stretch (basic and acidic residues) spans 742–752; it reads RGSEGRVEPKA. The span at 755–764 shows a compositional bias: polar residues; it reads VSSTEASSLG. Phosphoserine is present on Ser799. The segment covering 838–847 has biased composition (low complexity); that stretch reads SAFSFQAAPR. Thr877 is modified (phosphothreonine). Ser895 and Ser914 each carry phosphoserine. An interaction with GNAO1 region spans residues 899 to 1008; the sequence is AAVAPPEPAE…CCSRAGPTAE (110 aa). The disordered stretch occupies residues 943–986; it reads ERQIEEHGRQGAPAPPPAARAGPGRSGSVRTAPPDGAAKRPPGL. Ser993 carries the post-translational modification Phosphoserine. S-palmitoyl cysteine attachment occurs at residues Cys999 and Cys1000.

As to quaternary structure, interacts with activated forms of GNAI1, GNAO1 and GNAZ. Post-translationally, palmitoylation on Cys-999 and/or Cys-1000 is required for membrane targeting. As to expression, widely expressed in the central nervous system, with highest levels in spinal cord.

It is found in the cell membrane. The protein localises to the cell projection. Its subcellular location is the growth cone. In terms of biological role, may be involved in neurite outgrowth. The protein is G protein-regulated inducer of neurite outgrowth 1 (GPRIN1) of Homo sapiens (Human).